A 1000-amino-acid polypeptide reads, in one-letter code: Chloride channel protein D (1000 aa).

Composition is skewed to low complexity over residues 1-16 (MSSG…NDGN) and 38-60 (NNNN…NSSV). The tract at residues 1–90 (MSSGNPFDNG…SYDDDGDDEE (90 aa)) is disordered. The Cytoplasmic segment spans residues 1–256 (MSSGNPFDNG…LASDHEVLRW (256 aa)). Positions 71-80 (RIQEEERLTE) are enriched in basic and acidic residues. Transmembrane regions (helical) follow at residues 257–277 (IVSL…HACV), 290–310 (AVLE…NTLL), 416–436 (GAGA…LFSL), 442–462 (FWSI…TYTM), 493–513 (IIPF…FTWI), 534–554 (LEVF…PLFF), 678–698 (LGLW…AYTA), 710–730 (MLVI…HILG), 733–753 (VSID…GGVS), and 772–792 (YLLP…ALIH). 2 consecutive CBS domains span residues 824 to 881 (MAKK…ISDV) and 926 to 984 (MNLT…YREL).

Belongs to the chloride channel (TC 2.A.49) family.

It localises to the membrane. Functionally, voltage-gated chloride channel. Chloride channels may have several functions including the regulation of cell volume, membrane potential stabilization and signal transduction. Required for normal aggregation. The polypeptide is Chloride channel protein D (clcD) (Dictyostelium discoideum (Social amoeba)).